The primary structure comprises 275 residues: Probable ABC transporter permease protein PH1216 (275 aa).

6 helical membrane passes run 10-30 (LLYI…WSAI), 73-93 (IFTT…GFTI), 105-125 (LLAL…IPLV), 137-157 (ILGL…LLFT), 181-203 (IYTK…YQFT), and 241-261 (IQMA…IALG). An ABC transmembrane type-1 domain is found at 68–260 (ILNSLIFTTF…LPTLLIMIAL (193 aa)).

Belongs to the binding-protein-dependent transport system permease family. MalFG subfamily.

It localises to the cell membrane. Probably part of a binding-protein-dependent transport system PH1214/15/16. Probably responsible for the translocation of the substrate across the membrane. This chain is Probable ABC transporter permease protein PH1216, found in Pyrococcus horikoshii (strain ATCC 700860 / DSM 12428 / JCM 9974 / NBRC 100139 / OT-3).